We begin with the raw amino-acid sequence, 426 residues long: Probable serine/threonine-protein kinase PBL2 (426 aa).

The segment at 1-54 (MGNCLDSSAKVDNSNHSPHANSASSGSKVSSKTSRSTGPSGLSTTSYSTDSSFG) is disordered. A lipid anchor (N-myristoyl glycine) is attached at glycine 2. Cysteine 4 carries the S-palmitoyl cysteine lipid modification. Positions 14 to 38 (SNHSPHANSASSGSKVSSKTSRSTG) are enriched in low complexity. Positions 39–52 (PSGLSTTSYSTDSS) are enriched in polar residues. Phosphothreonine is present on threonine 75. Positions 86-369 (FRQDNLLGEG…SEVLVTLEQL (284 aa)) constitute a Protein kinase domain. Residues 92 to 100 (LGEGGFGCV) and lysine 124 contribute to the ATP site. Tyrosine 169 is subject to Phosphotyrosine. Aspartate 219 (proton acceptor) is an active-site residue. Serine 253 carries the O-UMP-serine modification. Serine 253 bears the Phosphoserine mark. Threonine 254 and threonine 259 each carry phosphothreonine. Threonine 254 bears the O-UMP-threonine mark. A Phosphotyrosine modification is found at tyrosine 267. The segment at 374 to 426 (KPGTKHTQMESPRFHHSSVMQKSPVRYSHDRPLLHMTPGASPLPSYTQSPRVR) is disordered. A compositionally biased stretch (polar residues) spans 417-426 (PSYTQSPRVR).

This sequence belongs to the protein kinase superfamily. Ser/Thr protein kinase family. As to quaternary structure, interacts with FLS2. Interacts with the Xanthomonas campestris effector XopAC/AvrAC; the recognition of X.campestris effector XopAC/AvrAC requires the presence of RKS1 and RPP13L4/ZAR1. Component of a stable high-order oligomeric complex made of RKS1 and RPP13L4/ZAR1 which recruits X.campestris effector XopAC/AvrAC-mediated uridylylated PBL2 in the presence of ATP to form a wheel-like pentameric resistosome; this complex triggers immunity toward X.campestris in vascular tissues. Binds to RKS1 when uridylylated. Post-translationally, uridylylated at Ser-253 and Thr-254 by Xanthomonas campestris effector AvrAC/XopAC; this uridylylation is necessary for specific recruitment to RKS1 and to trigger immunity. Strongly expressed in leaves, moderately in roots, and barely in flowers, mostly in pedicels.

The protein localises to the cell membrane. It localises to the nucleus. The catalysed reaction is L-seryl-[protein] + ATP = O-phospho-L-seryl-[protein] + ADP + H(+). It catalyses the reaction L-threonyl-[protein] + ATP = O-phospho-L-threonyl-[protein] + ADP + H(+). In terms of biological role, involved in disease resistance signaling. Contributes to pathogen-associated molecular pattern (PAMP)-triggered immunity (PTI) signaling and defense responses downstream of FLS2. Acts as a BIK1 decoy and enables Xanthomonas campestris AvrAC/XopAC detection; X.campestris effector AvrAC/XopAC-mediated uridylylation promotes the formation of a complex with RKS1 and RPP13L4/ZAR1 which, in turn, activates effector-triggered immunity (ETI) against X.campestris. Promotes, when uridylylated by AvrAC/XopAC, the release of ADP from the inactive RKS1-ZAR1 complex, thus activating the resistosome. In Arabidopsis thaliana (Mouse-ear cress), this protein is Probable serine/threonine-protein kinase PBL2.